Reading from the N-terminus, the 315-residue chain is tRNA dimethylallyltransferase (315 aa).

ATP is bound at residue 18 to 25 (GPTASGKT). Position 20–25 (20–25 (TASGKT)) interacts with substrate. Interaction with substrate tRNA stretches follow at residues 43–46 (DSAL), 167–171 (QRLSR), and 248–253 (RCVGYR).

This sequence belongs to the IPP transferase family. Monomer. Mg(2+) is required as a cofactor.

It carries out the reaction adenosine(37) in tRNA + dimethylallyl diphosphate = N(6)-dimethylallyladenosine(37) in tRNA + diphosphate. In terms of biological role, catalyzes the transfer of a dimethylallyl group onto the adenine at position 37 in tRNAs that read codons beginning with uridine, leading to the formation of N6-(dimethylallyl)adenosine (i(6)A). In Pseudoalteromonas atlantica (strain T6c / ATCC BAA-1087), this protein is tRNA dimethylallyltransferase.